We begin with the raw amino-acid sequence, 377 residues long: Succinyl-diaminopimelate desuccinylase (377 aa).

Residue H67 coordinates Zn(2+). Residue D69 is part of the active site. A Zn(2+)-binding site is contributed by D100. The active-site Proton acceptor is E134. 3 residues coordinate Zn(2+): E135, E163, and H349.

It belongs to the peptidase M20A family. DapE subfamily. As to quaternary structure, homodimer. The cofactor is Zn(2+). Co(2+) is required as a cofactor.

The enzyme catalyses N-succinyl-(2S,6S)-2,6-diaminopimelate + H2O = (2S,6S)-2,6-diaminopimelate + succinate. The protein operates within amino-acid biosynthesis; L-lysine biosynthesis via DAP pathway; LL-2,6-diaminopimelate from (S)-tetrahydrodipicolinate (succinylase route): step 3/3. Its function is as follows. Catalyzes the hydrolysis of N-succinyl-L,L-diaminopimelic acid (SDAP), forming succinate and LL-2,6-diaminopimelate (DAP), an intermediate involved in the bacterial biosynthesis of lysine and meso-diaminopimelic acid, an essential component of bacterial cell walls. The chain is Succinyl-diaminopimelate desuccinylase from Glaesserella parasuis serovar 5 (strain SH0165) (Haemophilus parasuis).